Consider the following 637-residue polypeptide: DNA gyrase subunit B (637 aa).

Residues 422–536 (CEVYIVEGDS…AGYVYLAMPP (115 aa)) form the Toprim domain. Glutamate 428, aspartate 501, and aspartate 503 together coordinate Mg(2+).

Belongs to the type II topoisomerase GyrB family. In terms of assembly, heterotetramer, composed of two GyrA and two GyrB chains. In the heterotetramer, GyrA contains the active site tyrosine that forms a transient covalent intermediate with DNA, while GyrB binds cofactors and catalyzes ATP hydrolysis. It depends on Mg(2+) as a cofactor. Mn(2+) serves as cofactor. Ca(2+) is required as a cofactor.

The protein resides in the cytoplasm. The catalysed reaction is ATP-dependent breakage, passage and rejoining of double-stranded DNA.. Its function is as follows. A type II topoisomerase that negatively supercoils closed circular double-stranded (ds) DNA in an ATP-dependent manner to modulate DNA topology and maintain chromosomes in an underwound state. Negative supercoiling favors strand separation, and DNA replication, transcription, recombination and repair, all of which involve strand separation. Also able to catalyze the interconversion of other topological isomers of dsDNA rings, including catenanes and knotted rings. Type II topoisomerases break and join 2 DNA strands simultaneously in an ATP-dependent manner. The protein is DNA gyrase subunit B of Treponema pallidum (strain Nichols).